Reading from the N-terminus, the 302-residue chain is Mas-related G-protein coupled receptor member A3 (302 aa).

The Extracellular segment spans residues 1–17 (MNETIPGSIDIETLIPD). The N-linked (GlcNAc...) asparagine glycan is linked to Asn-2. A helical transmembrane segment spans residues 18-38 (LMIIIFGLVGLTGNAIVFWLL). Topologically, residues 39–46 (GFRMHRTA) are cytoplasmic. Residues 47–67 (FLVYILNLALADFLFLLCHII) form a helical membrane-spanning segment. An N-linked (GlcNAc...) asparagine glycan is attached at Asn-68. Over 68-81 (NSTVDLLKFTLPKG) the chain is Extracellular. Residues 82 to 102 (IFAFCFHTIKRVLYITGLSML) traverse the membrane as a helical segment. Residues 103-129 (SAISTERCLSVLCPIWYHCRRPEHTST) lie on the Cytoplasmic side of the membrane. The helical transmembrane segment at 130-150 (VMCAVIWVLSLLICILDGYFC) threads the bilayer. Residues 151 to 167 (GYLDNHYFNYSVCQAWD) lie on the Extracellular side of the membrane. A glycan (N-linked (GlcNAc...) asparagine) is linked at Asn-159. The helical transmembrane segment at 168–188 (IFIGAYLMFLFVVLCLSTLAL) threads the bilayer. The Cytoplasmic segment spans residues 189 to 211 (LARLFCGARNMKFTRLFVTIMLT). A helical transmembrane segment spans residues 212-232 (VLVFLLCGLPWGITWFLLFWI). The Extracellular segment spans residues 233–242 (APGVFVLDYS). Residues 243-263 (PLLVLTAINSCANPIIYFFVG) form a helical membrane-spanning segment. At 264–302 (SFRQRLNKQTLKMVLQKALQDTPETPENMVEMSRNKAEP) the chain is on the cytoplasmic side.

This sequence belongs to the G-protein coupled receptor 1 family. Mas subfamily. In terms of tissue distribution, expressed exclusively in dorsal root ganglia and nodose ganglia. Expressed in a subset of sensory neurons that includes nociceptors. Expressed in the subclass of non-peptidergic sensory neurons that are IB4(+) and VR1(-).

Its subcellular location is the cell membrane. Orphan receptor. May be a receptor for RFamide-family neuropeptides such as NPFF and NPAF, which are analgesic in vivo. May regulate nociceptor function and/or development, including the sensation or modulation of pain. Activated by the antimalarial drug chloroquine. Mediates chloroquine-induced itch, in a histamine-independent manner. This is Mas-related G-protein coupled receptor member A3 (Mrgpra3) from Mus musculus (Mouse).